Reading from the N-terminus, the 73-residue chain is Small, acid-soluble spore protein C2 (73 aa).

The protein belongs to the alpha/beta-type SASP family.

In terms of biological role, SASP are bound to spore DNA. They are double-stranded DNA-binding proteins that cause DNA to change to an a-like conformation. They protect the DNA backbone from chemical and enzymatic cleavage and are thus involved in dormant spore's high resistance to UV light. This is Small, acid-soluble spore protein C2 (SASP-C2) from Priestia megaterium (Bacillus megaterium).